Here is a 227-residue protein sequence, read N- to C-terminus: Probable proteasome subunit beta type-2 (227 aa).

Positions methionine 1–glycine 6 are cleaved as a propeptide — removed in mature form. Threonine 7 serves as the catalytic Nucleophile.

Belongs to the peptidase T1B family. The 26S proteasome consists of a 20S proteasome core and two 19S regulatory subunits. The 20S proteasome core is composed of 28 subunits that are arranged in four stacked rings, resulting in a barrel-shaped structure. The two end rings are each formed by seven alpha subunits, and the two central rings are each formed by seven beta subunits. The catalytic chamber with the active sites is on the inside of the barrel.

The protein resides in the cytoplasm. The protein localises to the nucleus. The catalysed reaction is Cleavage of peptide bonds with very broad specificity.. Its function is as follows. The proteasome degrades poly-ubiquitinated proteins in the cytoplasm and in the nucleus. It is essential for the regulated turnover of proteins and for the removal of misfolded proteins. The proteasome is a multicatalytic proteinase complex that is characterized by its ability to cleave peptides with Arg, Phe, Tyr, Leu, and Glu adjacent to the leaving group at neutral or slightly basic pH. It has an ATP-dependent proteolytic activity. The sequence is that of Probable proteasome subunit beta type-2 (PUP1) from Encephalitozoon cuniculi (strain GB-M1) (Microsporidian parasite).